A 292-amino-acid polypeptide reads, in one-letter code: uncharacterized protein (292 aa).

Residues 13–35 (LFILFIIVVCIYLLPRVAINAFY) traverse the membrane as a helical segment.

Belongs to the serine esterase family.

The protein resides in the membrane. This is an uncharacterized protein from Salmonella typhimurium (strain LT2 / SGSC1412 / ATCC 700720).